The sequence spans 197 residues: Lipoprotein signal peptidase (197 aa).

2 helical membrane-spanning segments follow: residues 73–93 (SNAI…YLMI) and 97–117 (TIGS…NLID). Catalysis depends on residues D126 and D144. A helical membrane pass occupies residues 135 to 155 (YSFPVFNLADCFITIGVIILI).

Belongs to the peptidase A8 family.

The protein localises to the cell inner membrane. It carries out the reaction Release of signal peptides from bacterial membrane prolipoproteins. Hydrolyzes -Xaa-Yaa-Zaa-|-(S,diacylglyceryl)Cys-, in which Xaa is hydrophobic (preferably Leu), and Yaa (Ala or Ser) and Zaa (Gly or Ala) have small, neutral side chains.. Its pathway is protein modification; lipoprotein biosynthesis (signal peptide cleavage). In terms of biological role, this protein specifically catalyzes the removal of signal peptides from prolipoproteins. The sequence is that of Lipoprotein signal peptidase from Rickettsia felis (strain ATCC VR-1525 / URRWXCal2) (Rickettsia azadi).